A 286-amino-acid polypeptide reads, in one-letter code: Forkhead box protein E3 (286 aa).

The segment at 1 to 62 is disordered; sequence MDAHVAFSGF…GRRRRRPLQR (62 aa). Residues 64-158 constitute a DNA-binding region (fork-head); the sequence is KPPYSYIALI…DNGSFLRRRK (95 aa).

It is found in the nucleus. Its function is as follows. Transcription factor that controls lens epithelial cell growth through regulation of proliferation, apoptosis and cell cycle. During lens development, controls the ratio of the lens fiber cells to the cells of the anterior lens epithelium by regulating the rate of proliferation and differentiation. Controls lens vesicle closure and subsequent separation of the lens vesicle from ectoderm. Controls the expression of DNAJB1 in a pathway that is crucial for the development of the anterior segment of the eye. In Rattus norvegicus (Rat), this protein is Forkhead box protein E3 (Foxe3).